The sequence spans 240 residues: MPKYYCEYCDIYLTHSSPVGRRQHIQGRKHISAKIEYFQNLLREEGITPQNFLGFLGNRAFNNMLGNPMMNNMMPGNFPMHMKHGGMKHHSHYSRHSHRHHMSHGRYNRERHGHHSYSSKYHSHPMHMNSNSIGNPSGFSNGKYSGSFFSSPNAMHGNGKMFNNTIRDLVSNVNIDSDPVKDSQNGERVGDNAIDKVSSGMHDQGDRGDLGDHADHADHAGPVSATDGTANGNDQVSVDA.

A Matrin-type zinc finger spans residues tyrosine 4–glutamate 36. Disordered stretches follow at residues glycine 86–histidine 122 and isoleucine 175–alanine 240. Basic and acidic residues-rich tracts occupy residues aspartate 178–isoleucine 194 and aspartate 203–histidine 219. The segment covering threonine 226–alanine 240 has biased composition (polar residues).

The protein belongs to the U1 small nuclear ribonucleoprotein C family. In terms of assembly, U1 snRNP is composed of the 7 core Sm proteins B/B', D1, D2, D3, E, F and G that assemble in a heptameric protein ring on the Sm site of the small nuclear RNA to form the core snRNP, and at least 3 U1 snRNP-specific proteins U1-70K, U1-A and U1-C. U1-C interacts with U1 snRNA and the 5' splice-site region of the pre-mRNA.

It is found in the nucleus. Component of the spliceosomal U1 snRNP, which is essential for recognition of the pre-mRNA 5' splice-site and the subsequent assembly of the spliceosome. U1-C is directly involved in initial 5' splice-site recognition for both constitutive and regulated alternative splicing. The interaction with the 5' splice-site seems to precede base-pairing between the pre-mRNA and the U1 snRNA. Stimulates commitment or early (E) complex formation by stabilizing the base pairing of the 5' end of the U1 snRNA and the 5' splice-site region. This Plasmodium vivax (strain Salvador I) protein is U1 small nuclear ribonucleoprotein C.